The primary structure comprises 470 residues: Argininosuccinate lyase (470 aa).

The protein belongs to the lyase 1 family. Argininosuccinate lyase subfamily.

Its subcellular location is the cytoplasm. It carries out the reaction 2-(N(omega)-L-arginino)succinate = fumarate + L-arginine. It functions in the pathway amino-acid biosynthesis; L-arginine biosynthesis; L-arginine from L-ornithine and carbamoyl phosphate: step 3/3. This Leptospira borgpetersenii serovar Hardjo-bovis (strain JB197) protein is Argininosuccinate lyase.